The following is a 173-amino-acid chain: ATP-dependent protease subunit HslV (173 aa).

The active site involves Thr2. Na(+)-binding residues include Gly157, Cys160, and Thr163.

This sequence belongs to the peptidase T1B family. HslV subfamily. As to quaternary structure, a double ring-shaped homohexamer of HslV is capped on each side by a ring-shaped HslU homohexamer. The assembly of the HslU/HslV complex is dependent on binding of ATP.

The protein resides in the cytoplasm. The catalysed reaction is ATP-dependent cleavage of peptide bonds with broad specificity.. With respect to regulation, allosterically activated by HslU binding. Functionally, protease subunit of a proteasome-like degradation complex believed to be a general protein degrading machinery. This chain is ATP-dependent protease subunit HslV, found in Nitrosomonas eutropha (strain DSM 101675 / C91 / Nm57).